Here is a 223-residue protein sequence, read N- to C-terminus: Deoxyribose-phosphate aldolase 2 (223 aa).

Aspartate 89 functions as the Proton donor/acceptor in the catalytic mechanism. Residue lysine 152 is the Schiff-base intermediate with acetaldehyde of the active site. The active-site Proton donor/acceptor is the lysine 181.

It belongs to the DeoC/FbaB aldolase family. DeoC type 1 subfamily.

It localises to the cytoplasm. The enzyme catalyses 2-deoxy-D-ribose 5-phosphate = D-glyceraldehyde 3-phosphate + acetaldehyde. Its pathway is carbohydrate degradation; 2-deoxy-D-ribose 1-phosphate degradation; D-glyceraldehyde 3-phosphate and acetaldehyde from 2-deoxy-alpha-D-ribose 1-phosphate: step 2/2. Its function is as follows. Catalyzes a reversible aldol reaction between acetaldehyde and D-glyceraldehyde 3-phosphate to generate 2-deoxy-D-ribose 5-phosphate. This chain is Deoxyribose-phosphate aldolase 2, found in Bacillus licheniformis (strain ATCC 14580 / DSM 13 / JCM 2505 / CCUG 7422 / NBRC 12200 / NCIMB 9375 / NCTC 10341 / NRRL NRS-1264 / Gibson 46).